The following is a 283-amino-acid chain: Formamidopyrimidine-DNA glycosylase (283 aa).

The active-site Schiff-base intermediate with DNA is the Pro2. Glu3 acts as the Proton donor in catalysis. The active-site Proton donor; for beta-elimination activity is the Lys58. 3 residues coordinate DNA: His100, Arg119, and Arg162. The segment at 247-283 (DVYGREGAPCKGEGCTGQIKRIVQSGRSSFYCAQCQR) adopts an FPG-type zinc-finger fold. The active-site Proton donor; for delta-elimination activity is Arg273.

It belongs to the FPG family. As to quaternary structure, monomer. Zn(2+) serves as cofactor.

It catalyses the reaction Hydrolysis of DNA containing ring-opened 7-methylguanine residues, releasing 2,6-diamino-4-hydroxy-5-(N-methyl)formamidopyrimidine.. The enzyme catalyses 2'-deoxyribonucleotide-(2'-deoxyribose 5'-phosphate)-2'-deoxyribonucleotide-DNA = a 3'-end 2'-deoxyribonucleotide-(2,3-dehydro-2,3-deoxyribose 5'-phosphate)-DNA + a 5'-end 5'-phospho-2'-deoxyribonucleoside-DNA + H(+). Involved in base excision repair of DNA damaged by oxidation or by mutagenic agents. Acts as a DNA glycosylase that recognizes and removes damaged bases. Has a preference for oxidized purines, such as 7,8-dihydro-8-oxoguanine (8-oxoG). Has AP (apurinic/apyrimidinic) lyase activity and introduces nicks in the DNA strand. Cleaves the DNA backbone by beta-delta elimination to generate a single-strand break at the site of the removed base with both 3'- and 5'-phosphates. In Roseobacter denitrificans (strain ATCC 33942 / OCh 114) (Erythrobacter sp. (strain OCh 114)), this protein is Formamidopyrimidine-DNA glycosylase.